We begin with the raw amino-acid sequence, 557 residues long: Kelch repeat and BTB domain-containing protein 2 (557 aa).

Residues 26 to 95 form the BTB domain; the sequence is CDVIITIRDG…LYNRHISSMN (70 aa). Positions 143-223 constitute a BACK domain; it reads IVKYIKRMLM…CIDIQNLDKK (81 aa). Kelch repeat units lie at residues 305–352, 353–399, and 415–464; these read EIII…VIDD, TIYA…VLDQ, and SVHA…SHED.

In terms of assembly, interacts (via BTB domain) with host CUL3.

Its subcellular location is the host cytoplasm. In terms of biological role, probable substrate-specific adapter of CUL3-containing E3 ubiquitin-protein ligases which mediate the ubiquitination and subsequent proteasomal degradation of host target proteins. The polypeptide is Kelch repeat and BTB domain-containing protein 2 (KBTB2) (Cowpox virus (strain Brighton Red) (CPV)).